Reading from the N-terminus, the 188-residue chain is Peptidyl-tRNA hydrolase (188 aa).

Tyr14 lines the tRNA pocket. His19 functions as the Proton acceptor in the catalytic mechanism. Residues Tyr64, Asn66, and Asn112 each contribute to the tRNA site.

This sequence belongs to the PTH family. As to quaternary structure, monomer.

It is found in the cytoplasm. It catalyses the reaction an N-acyl-L-alpha-aminoacyl-tRNA + H2O = an N-acyl-L-amino acid + a tRNA + H(+). In terms of biological role, hydrolyzes ribosome-free peptidyl-tRNAs (with 1 or more amino acids incorporated), which drop off the ribosome during protein synthesis, or as a result of ribosome stalling. Catalyzes the release of premature peptidyl moieties from peptidyl-tRNA molecules trapped in stalled 50S ribosomal subunits, and thus maintains levels of free tRNAs and 50S ribosomes. This chain is Peptidyl-tRNA hydrolase, found in Clostridium perfringens (strain ATCC 13124 / DSM 756 / JCM 1290 / NCIMB 6125 / NCTC 8237 / Type A).